A 179-amino-acid polypeptide reads, in one-letter code: Large ribosomal subunit protein uL5 (179 aa).

Belongs to the universal ribosomal protein uL5 family. As to quaternary structure, part of the 50S ribosomal subunit; part of the 5S rRNA/L5/L18/L25 subcomplex. Contacts the 5S rRNA and the P site tRNA. Forms a bridge to the 30S subunit in the 70S ribosome.

This is one of the proteins that bind and probably mediate the attachment of the 5S RNA into the large ribosomal subunit, where it forms part of the central protuberance. In the 70S ribosome it contacts protein S13 of the 30S subunit (bridge B1b), connecting the 2 subunits; this bridge is implicated in subunit movement. Contacts the P site tRNA; the 5S rRNA and some of its associated proteins might help stabilize positioning of ribosome-bound tRNAs. In Bacillus mycoides (strain KBAB4) (Bacillus weihenstephanensis), this protein is Large ribosomal subunit protein uL5.